Reading from the N-terminus, the 181-residue chain is Adenine phosphoribosyltransferase (181 aa).

Belongs to the purine/pyrimidine phosphoribosyltransferase family. Homodimer.

The protein resides in the cytoplasm. The catalysed reaction is AMP + diphosphate = 5-phospho-alpha-D-ribose 1-diphosphate + adenine. It participates in purine metabolism; AMP biosynthesis via salvage pathway; AMP from adenine: step 1/1. Its function is as follows. Catalyzes a salvage reaction resulting in the formation of AMP, that is energically less costly than de novo synthesis. The sequence is that of Adenine phosphoribosyltransferase from Cytophaga hutchinsonii (strain ATCC 33406 / DSM 1761 / CIP 103989 / NBRC 15051 / NCIMB 9469 / D465).